The chain runs to 452 residues: Metacaspase-1 (452 aa).

A disordered region spans residues 1–97 (MYPGAGRPTY…GPPLQGRPRD (97 aa)). Low complexity predominate over residues 16–41 (QKGPYGQPQYQQQYAPPYPERYQQPY). Residues His-238 and Cys-294 contribute to the active site.

It belongs to the peptidase C14B family.

Its function is as follows. Involved in cell death (apoptosis). This is Metacaspase-1 (MCA1) from Eremothecium gossypii (strain ATCC 10895 / CBS 109.51 / FGSC 9923 / NRRL Y-1056) (Yeast).